The primary structure comprises 435 residues: MTAKWEKTGTNEGKLTFEVGTDKIKEGVDKAFDRTKKQLNVPGFRKGHVPRQIFNKMYGEEALYQDALNIVLPEAYEAAIKEAGIEPVDQPQVDVESMEKGEAWVLSAIVTVKPEVKLGEYKGVKVIKQSTRVTSKEVDEEIEKKREQQAELVLKEGKPAENGDTVTIDFDGSVDGVAFDGGKADNYDLVLGSNSFIPGFEDQLIGHNTDEDVDVNVTFPDDYQAEDLQGKDALFKVKIHEIKTKELPELDDEFAKDVDEDVDSLEDLKVKTKEEIKSRKIQAASDAKETEAVQAAVDNAEIAEIPEAMLNEDVDRQVNQYLANMQQQGISPEMYFQLTGSSEDQLRDQLREGAENRVKTTLVLEAIVEAEKIDPSDDEVAAEIKDLAEQYGMEEKAVRSALSEDMIKHDVAIKSAVELIKDSAIEEPKSKAAKK.

Residues 163-248 (GDTVTIDFDG…IHEIKTKELP (86 aa)) enclose the PPIase FKBP-type domain.

Belongs to the FKBP-type PPIase family. Tig subfamily.

It localises to the cytoplasm. It catalyses the reaction [protein]-peptidylproline (omega=180) = [protein]-peptidylproline (omega=0). Functionally, involved in protein export. Acts as a chaperone by maintaining the newly synthesized protein in an open conformation. Functions as a peptidyl-prolyl cis-trans isomerase. This Pediococcus pentosaceus (strain ATCC 25745 / CCUG 21536 / LMG 10740 / 183-1w) protein is Trigger factor.